A 419-amino-acid polypeptide reads, in one-letter code: Arginine biosynthesis bifunctional protein ArgJ (419 aa).

6 residues coordinate substrate: threonine 154, lysine 180, threonine 191, glutamate 277, asparagine 414, and threonine 419. Residue threonine 191 is the Nucleophile of the active site.

Belongs to the ArgJ family. Heterotetramer of two alpha and two beta chains.

The protein resides in the cytoplasm. The catalysed reaction is N(2)-acetyl-L-ornithine + L-glutamate = N-acetyl-L-glutamate + L-ornithine. It carries out the reaction L-glutamate + acetyl-CoA = N-acetyl-L-glutamate + CoA + H(+). It functions in the pathway amino-acid biosynthesis; L-arginine biosynthesis; L-ornithine and N-acetyl-L-glutamate from L-glutamate and N(2)-acetyl-L-ornithine (cyclic): step 1/1. It participates in amino-acid biosynthesis; L-arginine biosynthesis; N(2)-acetyl-L-ornithine from L-glutamate: step 1/4. Functionally, catalyzes two activities which are involved in the cyclic version of arginine biosynthesis: the synthesis of N-acetylglutamate from glutamate and acetyl-CoA as the acetyl donor, and of ornithine by transacetylation between N(2)-acetylornithine and glutamate. This Thermosynechococcus vestitus (strain NIES-2133 / IAM M-273 / BP-1) protein is Arginine biosynthesis bifunctional protein ArgJ.